We begin with the raw amino-acid sequence, 294 residues long: HTH-type transcriptional regulator XapR (294 aa).

Residues Thr7–Thr64 enclose the HTH lysR-type domain. The H-T-H motif DNA-binding region spans Phe24–Lys43.

Belongs to the LysR transcriptional regulatory family.

Functionally, positive regulator required for the expression of xapA and xapB. Binds to the inducer xanthosine. The polypeptide is HTH-type transcriptional regulator XapR (xapR) (Escherichia coli (strain K12)).